Here is a 308-residue protein sequence, read N- to C-terminus: D-alanine--D-alanine ligase (308 aa).

In terms of domain architecture, ATP-grasp spans 102–302; that stretch reads KTVAKSAGIP…FGALLSWMVE (201 aa). ATP is bound at residue 128–183; that stretch reads PMEPPYVVKPVAEGSSFGVVIVREGQSHPPQVLGSAEWGYGERVMVERYIPGRELT. Residues aspartate 252, glutamate 269, and asparagine 271 each contribute to the Mg(2+) site.

It belongs to the D-alanine--D-alanine ligase family. Requires Mg(2+) as cofactor. The cofactor is Mn(2+).

It is found in the cytoplasm. It carries out the reaction 2 D-alanine + ATP = D-alanyl-D-alanine + ADP + phosphate + H(+). It participates in cell wall biogenesis; peptidoglycan biosynthesis. In terms of biological role, cell wall formation. This chain is D-alanine--D-alanine ligase, found in Chelativorans sp. (strain BNC1).